We begin with the raw amino-acid sequence, 1678 residues long: MNSSKNPPSTLLDVFLDTARNLDTALRNVLECGEHRWSYRELDTVSSALAQHLRYTVGLSPTVAVISENHPYILALMLAVWKLGGTFAPIDVHSPAELVAGMLNIVSPSCLVIPSSDVTNQTLACDLNIPVVAFHPHQSTIPELNKKYLTDSQISPDLPFSDPNRPALYLFTSSATSRSNLKCVPLTHTFILRNSLSKRAWCKRMRPETDFDGIRVLGWAPWSHVLAHMQDIGPLTLLNAGCYVFATTPSTYPTELKDDRDLISCAANAIMYKGVKSFACLPFVLGGLKALCESEPSVKAHLQVEERAQLLKSLQHMEILECGGAMLEASVASWAIENCIPISIGIGMTETGGALFAGPVQAIKTGFSSEDKFIEDATYLLVKDDHESHAEEDINEGELVVKSKMLPRGYLGYSDPSFSVDDAGWVTFRTGDRYSVTPDGKFSWLGRNTDFIQMTSGETLDPRPIESSLCESSLISRACVIGDKFLNGPAAAVCAIIELEPTAVEKGQAHSREIARVFAPINRDLPPPLRIAWSHVLVLQPSEKIPMTKKGTIFRKKIEQVFGSALGGSSGDNSQATADAGVVRRDELSNTVKHIISRVLGVSDDELLWTLSFAELGMTSALATRIANELNEVLVGVNLPINACYIHVDLPSLSNAVYAKLAHLKLPDRTPEPRQAPVENSGGKEIVVVGQAFRLPGSINDVASLRDAFLARQASSIITEIPSDRWDHASFYPKDIRFNKAGLVDIANYDHSFFGLTATEALYLSPTMRLALEVSFEALENANIPVSQLKGSQTAVYVATTDDGFETLLNAEAGYDAYTRFYGTGRAASTASGRISCLLDVHGPSITVDTACSGGAVCIDQAIDYLQSSSAADTAIICASNTHCWPGSFRFLSAQGMVSPGGRCATFTTDADGYVPSEGAVAFILKTREAAMRDKDTILATIKATQISHNGRSQGLVAPNVNSQADLHRSLLQKAGLSPADIRFIEAHGTGTSLGDLSEIQAINDAYTSSQPRTTGPLIVSASKTVIGHTEPAGPLVGMLSVLNSFKEGAVPGLAHLTADNLNPSLDCSSVPLLIPYQPVHLAAPKPHRAAVRSYGFSGTLGGIVLEAPDEERLEEELPNDKPMLFVVSAKTHTALIEYLGRYLEFLLQANPQDFCDICYTSCVGREHYRYRYACVANDMEDLIGQLQKRLGSKVPPKPSYKRGALAFAFSGQGTQFRGMATELAKAYSGFRKIVSDLAKRASELSGHAIDRFLLAYDIGAENVAPDSEADQICIFVYQCSVLRWLQTMGIRPSAVIGHSLGEISASVAAGALSLDSALDLVISRARLLRSSASAPAGMAAMSASQDEVVELIGKLDLDKANSLSVSVINGPQNTVVSGSSAAIESIVALAKGRKIKASALNINQAFHSPYVDSAVPGLRAWSEKHISSARPLQIPLYSTLLGAQISEGEMLNPDHWVDHARKPVQFAQAATTMKESFTGVIIDIGPQVVAWSLLLSNGLTSVTALAAKRGRSQQVAFLSALADLYQDYGVVPDFVGLYAQQEDASRLKKTDILTYPFQRGEETLSSGSSTPTLENTDLDSGKELLMGPTRGLLRADDLRDSIVSSVKDVLELKSNEDLDLSESLNALGMDSIMFAQLRKRIGEGLGLNVPMVFLSDAFSIGEMVSNLVEQAEASEDN.

The adenylation (A) domain stretch occupies residues 33-453 (GEHRWSYREL…WLGRNTDFIQ (421 aa)). Residues 586–661 (DELSNTVKHI…SLSNAVYAKL (76 aa)) enclose the Carrier 1 domain. Ser-620 carries the post-translational modification O-(pantetheine 4'-phosphoryl)serine. Residues 683–1108 (GKEIVVVGQA…GTLGGIVLEA (426 aa)) form the Ketosynthase family 3 (KS3) domain. Residues Cys-852, His-988, and His-1029 each act as for beta-ketoacyl synthase activity in the active site. A malonyl-CoA:ACP transacylase (MAT) domain region spans residues 1201–1499 (YKRGALAFAF…VAWSLLLSNG (299 aa)). The interval 1562-1582 (EETLSSGSSTPTLENTDLDSG) is disordered. Over residues 1564–1576 (TLSSGSSTPTLEN) the composition is skewed to polar residues. The 76-residue stretch at 1597–1672 (DDLRDSIVSS…EMVSNLVEQA (76 aa)) folds into the Carrier 2 domain. Ser-1632 is modified (O-(pantetheine 4'-phosphoryl)serine).

This sequence in the N-terminal section; belongs to the NRP synthetase family.

The enzyme catalyses (E)-caffeate + 2 malonyl-CoA + ATP + H(+) = hispidin + AMP + 2 CO2 + diphosphate + 2 CoA. Its pathway is secondary metabolite biosynthesis. Functionally, PKS-NRPS hybrid synthetase; part of the gene cluster that mediates the fungal bioluminescence cycle. Performs the biosynthesis of hispidin from caffeic acid by two cycles of addition of malonyl units followed by lactonization. The fungal bioluminescence cycle begins with the hispidin synthetase that catalyzes the formation of hispidin which is further hydroxylated by the hispidin-3-hydroxylase, yielding the fungal luciferin 3-hydroxyhispidin. The luciferase then produces an endoperoxide as a high-energy intermediate with decomposition that yields oxyluciferin (also known as caffeoylpyruvate) and light emission. Oxyluciferin can be recycled to caffeic acid by caffeoylpyruvate hydrolase. The chain is Hispidin synthase from Neonothopanus nambi (Agaricus nambi).